A 426-amino-acid chain; its full sequence is Histidine--tRNA ligase 1 (426 aa).

The protein belongs to the class-II aminoacyl-tRNA synthetase family. As to quaternary structure, homodimer.

It localises to the cytoplasm. The enzyme catalyses tRNA(His) + L-histidine + ATP = L-histidyl-tRNA(His) + AMP + diphosphate + H(+). This Bacillus cereus (strain ATCC 14579 / DSM 31 / CCUG 7414 / JCM 2152 / NBRC 15305 / NCIMB 9373 / NCTC 2599 / NRRL B-3711) protein is Histidine--tRNA ligase 1.